Consider the following 419-residue polypeptide: Histone acetyltransferase type B subunit 2 (419 aa).

5 WD repeats span residues 131-171, 177-217, 225-265, 267-307, and 311-351; these read PHDG…VEAL, YHTE…KNIK, AHTD…IIHN, NTKK…NPLY, and GHED…AEQT. Residues 353–357 form an interaction with the histone H4 N-terminus region; it reads DEIED. The WD 6 repeat unit spans residues 368 to 408; it reads GHKTSINDIAVNPNINWLVASAEEDNIVQIWKCSSNIPRIG.

The protein belongs to the WD repeat RBAP46/RBAP48/MSI1 family. In terms of assembly, component of the HAT-B complex composed of at least HAT1 and HAT2. The HAT-B complex binds to histone H4 tail.

It is found in the cytoplasm. It localises to the nucleus. Functionally, regulatory subunit of the histone acetylase B (HAT-B) complex. The complex acetylates Lys-12 of histone H4 which is required for telomeric silencing. The polypeptide is Histone acetyltransferase type B subunit 2 (HAT2) (Candida glabrata (strain ATCC 2001 / BCRC 20586 / JCM 3761 / NBRC 0622 / NRRL Y-65 / CBS 138) (Yeast)).